The chain runs to 66 residues: DNA-directed RNA polymerase subunit Rpo10 (66 aa).

Positions 7, 10, 44, and 45 each coordinate Zn(2+).

The protein belongs to the archaeal Rpo10/eukaryotic RPB10 RNA polymerase subunit family. Part of the RNA polymerase complex. Zn(2+) serves as cofactor.

It is found in the cytoplasm. It catalyses the reaction RNA(n) + a ribonucleoside 5'-triphosphate = RNA(n+1) + diphosphate. Its function is as follows. DNA-dependent RNA polymerase (RNAP) catalyzes the transcription of DNA into RNA using the four ribonucleoside triphosphates as substrates. In Pyrobaculum neutrophilum (strain DSM 2338 / JCM 9278 / NBRC 100436 / V24Sta) (Thermoproteus neutrophilus), this protein is DNA-directed RNA polymerase subunit Rpo10.